A 565-amino-acid chain; its full sequence is Alkaline nuclease (565 aa).

It belongs to the herpesviridae alkaline nuclease family. Interacts with major DNA-binding protein; this interaction increases the nuclease processivity of the alkaline exonuclease.

The protein resides in the host nucleus. Its subcellular location is the host cytoplasm. Plays a role in processing non linear or branched viral DNA intermediates in order to promote the production of mature packaged unit-length linear progeny viral DNA molecules. Exhibits endonuclease and exonuclease activities and accepts both double-stranded and single-stranded DNA as substrate. Exonuclease digestion of DNA is in the 5'-&gt; 3' direction and the products are 5'-monophosphate nucleosides. Additionally, forms a recombinase with the major DNA-binding protein, which displays strand exchange activity. The protein is Alkaline nuclease of Equus caballus (Horse).